Consider the following 219-residue polypeptide: Zinc finger C2HC domain-containing protein 1B (219 aa).

C2HC/C3H-type zinc fingers lie at residues 14–43 (ELFPCEVCGRRFAADVLERHGPICRKLFNK) and 117–146 (DYIQCPYCKRRFNETAASRHINFCKDQESR). The Zn(2+) site is built by Cys-18, Cys-21, His-33, Cys-37, Cys-121, Cys-124, His-136, and Cys-140. The interval 190 to 219 (EASAAPTRPAVDPASGAKLRQGFAKSSKKD) is disordered.

Belongs to the ZC2HC1 family. Zn(2+) serves as cofactor.

This chain is Zinc finger C2HC domain-containing protein 1B (ZC2HC1B), found in Bos taurus (Bovine).